The sequence spans 84 residues: UPF0297 protein Csac_1773 (84 aa).

The protein belongs to the UPF0297 family.

The chain is UPF0297 protein Csac_1773 from Caldicellulosiruptor saccharolyticus (strain ATCC 43494 / DSM 8903 / Tp8T 6331).